Consider the following 380-residue polypeptide: Shedu protein SduA (380 aa).

Its function is as follows. Only component of antiviral defense system Shedu. Expression of Shedu in B.subtilis (strain BEST7003) confers resistance to phages phi105, phi29, rho14 and to a lesser extent to SPP1. May be an endonuclease. The sequence is that of Shedu protein SduA from Bacillus cereus (strain B4264).